The primary structure comprises 230 residues: Probable septum site-determining protein MinC (230 aa).

The protein belongs to the MinC family. In terms of assembly, interacts with MinD and FtsZ.

In terms of biological role, cell division inhibitor that blocks the formation of polar Z ring septums. Rapidly oscillates between the poles of the cell to destabilize FtsZ filaments that have formed before they mature into polar Z rings. Prevents FtsZ polymerization. This is Probable septum site-determining protein MinC from Cronobacter sakazakii (strain ATCC BAA-894) (Enterobacter sakazakii).